Here is a 231-residue protein sequence, read N- to C-terminus: Tol-Pal system protein TolQ (231 aa).

The next 3 helical transmembrane spans lie at 20–40 (IVVQLVMLTLVAASVTSWIMI), 134–154 (FLATVGSTSPYVGLFGTVWGI), and 176–196 (IAEALIATAIGLFAAIPAVIA).

It belongs to the ExbB/TolQ family. As to quaternary structure, the Tol-Pal system is composed of five core proteins: the inner membrane proteins TolA, TolQ and TolR, the periplasmic protein TolB and the outer membrane protein Pal. They form a network linking the inner and outer membranes and the peptidoglycan layer.

It localises to the cell inner membrane. Part of the Tol-Pal system, which plays a role in outer membrane invagination during cell division and is important for maintaining outer membrane integrity. In Pseudomonas aeruginosa (strain ATCC 15692 / DSM 22644 / CIP 104116 / JCM 14847 / LMG 12228 / 1C / PRS 101 / PAO1), this protein is Tol-Pal system protein TolQ.